The primary structure comprises 427 residues: Adenylosuccinate synthetase (427 aa).

Residues Gly13–Lys19 and Gly41–Thr43 each bind GTP. Catalysis depends on Asp14, which acts as the Proton acceptor. Mg(2+)-binding residues include Asp14 and Gly41. IMP contacts are provided by residues Asp14–Lys17, Asn39–His42, Thr129, Arg143, Gln224, Thr239, and Arg303. His42 acts as the Proton donor in catalysis. The tract at residues Gln117–Tyr137 is disordered. Thr299–Arg305 contributes to the substrate binding site. GTP is bound by residues Arg305, Lys331–Asp333, and Gly414–Gly416.

Belongs to the adenylosuccinate synthetase family. As to quaternary structure, homodimer. Mg(2+) is required as a cofactor.

The protein localises to the cytoplasm. It carries out the reaction IMP + L-aspartate + GTP = N(6)-(1,2-dicarboxyethyl)-AMP + GDP + phosphate + 2 H(+). The protein operates within purine metabolism; AMP biosynthesis via de novo pathway; AMP from IMP: step 1/2. Plays an important role in the de novo pathway of purine nucleotide biosynthesis. Catalyzes the first committed step in the biosynthesis of AMP from IMP. In Caldicellulosiruptor saccharolyticus (strain ATCC 43494 / DSM 8903 / Tp8T 6331), this protein is Adenylosuccinate synthetase.